The sequence spans 181 residues: Protein Syd (181 aa).

The protein belongs to the Syd family.

Its subcellular location is the cell inner membrane. In terms of biological role, interacts with the SecY protein in vivo. May bind preferentially to an uncomplexed state of SecY, thus functioning either as a chelating agent for excess SecY in the cell or as a regulatory factor that negatively controls the translocase function. This chain is Protein Syd, found in Shigella flexneri.